The following is a 336-amino-acid chain: Protein-glutamate methylesterase/protein-glutamine glutaminase 3 (336 aa).

Positions Lys-2–Leu-119 constitute a Response regulatory domain. 4-aspartylphosphate is present on Asp-53. One can recognise a CheB-type methylesterase domain in the interval Pro-147–Gln-336. Active-site residues include Ser-159, His-186, and Asp-279.

It belongs to the CheB family. Post-translationally, phosphorylated by CheA. Phosphorylation of the N-terminal regulatory domain activates the methylesterase activity.

The protein localises to the cytoplasm. The catalysed reaction is [protein]-L-glutamate 5-O-methyl ester + H2O = L-glutamyl-[protein] + methanol + H(+). It catalyses the reaction L-glutaminyl-[protein] + H2O = L-glutamyl-[protein] + NH4(+). Involved in chemotaxis. Part of a chemotaxis signal transduction system that modulates chemotaxis in response to various stimuli. Catalyzes the demethylation of specific methylglutamate residues introduced into the chemoreceptors (methyl-accepting chemotaxis proteins or MCP) by CheR. Also mediates the irreversible deamidation of specific glutamine residues to glutamic acid. This is Protein-glutamate methylesterase/protein-glutamine glutaminase 3 from Pseudomonas savastanoi pv. phaseolicola (strain 1448A / Race 6) (Pseudomonas syringae pv. phaseolicola (strain 1448A / Race 6)).